We begin with the raw amino-acid sequence, 221 residues long: PKHD-type hydroxylase PMN2A_0775 (221 aa).

Residues 80 to 174 (LIHGVMFTQS…RHVCVGWIQS (95 aa)) enclose the Fe2OG dioxygenase domain. Fe cation-binding residues include H98, D100, and H155. A 2-oxoglutarate-binding site is contributed by R165.

It depends on Fe(2+) as a cofactor. The cofactor is L-ascorbate.

The protein is PKHD-type hydroxylase PMN2A_0775 of Prochlorococcus marinus (strain NATL2A).